The primary structure comprises 344 residues: MTECWYIPEEVADRREENRLSPNVPGSYEALSEARVFFRHFDPKEVSDDIEGFIQPLLKKLNYHSYDVVNLSPATLGDEKFEALAEQHFMEHTHEDDEVRLILEGQGYFDVRDANDKWIRLLSKPGDCIVLPAGMYHRFTTDHSKCIKTLRIFKEAPRWIALNRGPETEEKPARKEYLARLHAPAETAVGAANSHTIFSLHYPLKLDAELTVITKRLLEQHSKQPLALMIFLTGSTDPTTGASWCPDCIPAKPQVAQRFAELQGKYGEERAIFLQLPVERAGYLGNPEYPYRKHPTLQLASVPTLLVLTPTKDAKEKGDVQWYDRLEVKMRTCDIDKADVLSLE.

His92, His94, Glu98, and His137 together coordinate Fe(2+). His92, His94, Glu98, and His137 together coordinate Ni(2+).

Belongs to the acireductone dioxygenase (ARD) family. Fe(2+) is required as a cofactor. The cofactor is Ni(2+).

It localises to the cytoplasm. Its subcellular location is the nucleus. It carries out the reaction 1,2-dihydroxy-5-(methylsulfanyl)pent-1-en-3-one + O2 = 4-methylsulfanyl-2-oxobutanoate + formate + 2 H(+). The catalysed reaction is 1,2-dihydroxy-5-(methylsulfanyl)pent-1-en-3-one + O2 = 3-(methylsulfanyl)propanoate + CO + formate + 2 H(+). The protein operates within amino-acid biosynthesis; L-methionine biosynthesis via salvage pathway; L-methionine from S-methyl-5-thio-alpha-D-ribose 1-phosphate: step 5/6. Its function is as follows. Catalyzes 2 different reactions between oxygen and the acireductone 1,2-dihydroxy-3-keto-5-methylthiopentene (DHK-MTPene) depending upon the metal bound in the active site. Fe-containing acireductone dioxygenase (Fe-ARD) produces formate and 2-keto-4-methylthiobutyrate (KMTB), the alpha-ketoacid precursor of methionine in the methionine recycle pathway. Ni-containing acireductone dioxygenase (Ni-ARD) produces methylthiopropionate, carbon monoxide and formate, and does not lie on the methionine recycle pathway. The chain is Acireductone dioxygenase from Leishmania braziliensis.